We begin with the raw amino-acid sequence, 76 residues long: UPF0729 protein C18orf32 homolog (76 aa).

The tract at residues 1–37 (MVCIPCIVIPVLLWVYKKFLEPYIYPLISPFVSRMWP) is necessary for its localzation to the endoplasmic reticulum and lipid droplets. Residues 47–56 (KNKGKVDYKG) show a composition bias toward basic and acidic residues. The interval 47–76 (KNKGKVDYKGADINGLPTRGPTEMCDKKKD) is disordered.

Belongs to the UPF0729 family. In terms of assembly, interacts with DERL1 and AMFR. Post-translationally, undergoes ER-associated degradation (ERAD).

It localises to the endoplasmic reticulum. It is found in the lipid droplet. Functionally, may activate the NF-kappa-B signaling pathway. This chain is UPF0729 protein C18orf32 homolog, found in Bos taurus (Bovine).